A 194-amino-acid polypeptide reads, in one-letter code: Crossover junction endodeoxyribonuclease RuvC (194 aa).

Catalysis depends on residues aspartate 7, glutamate 68, and aspartate 141. Residues aspartate 7, glutamate 68, and aspartate 141 each coordinate Mg(2+).

It belongs to the RuvC family. Homodimer which binds Holliday junction (HJ) DNA. The HJ becomes 2-fold symmetrical on binding to RuvC with unstacked arms; it has a different conformation from HJ DNA in complex with RuvA. In the full resolvosome a probable DNA-RuvA(4)-RuvB(12)-RuvC(2) complex forms which resolves the HJ. Requires Mg(2+) as cofactor.

The protein resides in the cytoplasm. The enzyme catalyses Endonucleolytic cleavage at a junction such as a reciprocal single-stranded crossover between two homologous DNA duplexes (Holliday junction).. Functionally, the RuvA-RuvB-RuvC complex processes Holliday junction (HJ) DNA during genetic recombination and DNA repair. Endonuclease that resolves HJ intermediates. Cleaves cruciform DNA by making single-stranded nicks across the HJ at symmetrical positions within the homologous arms, yielding a 5'-phosphate and a 3'-hydroxyl group; requires a central core of homology in the junction. The consensus cleavage sequence is 5'-(A/T)TT(C/G)-3'. Cleavage occurs on the 3'-side of the TT dinucleotide at the point of strand exchange. HJ branch migration catalyzed by RuvA-RuvB allows RuvC to scan DNA until it finds its consensus sequence, where it cleaves and resolves the cruciform DNA. The sequence is that of Crossover junction endodeoxyribonuclease RuvC from Bifidobacterium longum (strain DJO10A).